We begin with the raw amino-acid sequence, 637 residues long: tRNA uridine 5-carboxymethylaminomethyl modification enzyme MnmG (637 aa).

14 to 19 (GAGHAG) is a binding site for FAD. Residue 279 to 293 (GPRYCPSIEDKVVRF) coordinates NAD(+).

This sequence belongs to the MnmG family. As to quaternary structure, homodimer. Heterotetramer of two MnmE and two MnmG subunits. Requires FAD as cofactor.

It is found in the cytoplasm. Its function is as follows. NAD-binding protein involved in the addition of a carboxymethylaminomethyl (cmnm) group at the wobble position (U34) of certain tRNAs, forming tRNA-cmnm(5)s(2)U34. The sequence is that of tRNA uridine 5-carboxymethylaminomethyl modification enzyme MnmG from Desulfitobacterium hafniense (strain Y51).